The sequence spans 859 residues: Tripartite terminase subunit 1 (859 aa).

The C3H1-type zinc finger occupies 231 to 259 (CCICLDELSVTANQGDTIYKRLGYSVCDH). The segment covering 512 to 525 (TRPRADKAGGRAED) has biased composition (basic and acidic residues). The segment at 512–542 (TRPRADKAGGRAEDGAGDCDDEGYPGAADAT) is disordered. ATP is bound at residue 782–789 (FESIFQCG).

The protein belongs to the herpesviridae TRM1 protein family. In terms of assembly, associates with TRM2 and TRM3 to form the tripartite terminase complex. Interacts with portal protein.

Its subcellular location is the host nucleus. In terms of biological role, component of the molecular motor that translocates viral genomic DNA in empty capsid during DNA packaging. Forms a tripartite terminase complex together with TRM2 and TRM3 in the host cytoplasm. Once the complex reaches the host nucleus, it interacts with the capsid portal vertex. This portal forms a ring in which genomic DNA is translocated into the capsid. TRM1 carries an endonuclease activity that plays an important role for the cleavage of concatemeric viral DNA into unit length genomes. The sequence is that of Tripartite terminase subunit 1 from Amazona oratrix (yellow-headed parrot).